The following is a 450-amino-acid chain: TNF receptor-associated factor family protein DDB_G0273433/DDB_G0273509 (450 aa).

The RING-type; degenerate zinc finger occupies 26-73 (CQICFNSVIDFKKETLSFDVLQCRNGHISCHECWNRQLSIKQECPSCK). 2 consecutive TRAF-type zinc fingers follow at residues 129 to 185 (HHLK…KKLN) and 186 to 243 (KHIE…SQLS). Residues 257-297 (QNVMDLHKLQLDECNQDYRKLEKQNRDLEKRLFYLESTVNS) are a coiled coil. Residues 319–439 (VYKGKWVINN…NNSLTISISI (121 aa)) form the MATH domain.

The protein belongs to the TNF receptor-associated factor family. A subfamily.

It is found in the cytoplasm. Its function is as follows. Probable adapter protein and signal transducer that links members of the tumor necrosis factor receptor family to different signaling pathways by association with the receptor cytoplasmic domain and kinases. The chain is TNF receptor-associated factor family protein DDB_G0273433/DDB_G0273509 from Dictyostelium discoideum (Social amoeba).